The following is a 130-amino-acid chain: Small ribosomal subunit protein uS8 (130 aa).

This sequence belongs to the universal ribosomal protein uS8 family. In terms of assembly, part of the 30S ribosomal subunit. Contacts proteins S5 and S12.

Functionally, one of the primary rRNA binding proteins, it binds directly to 16S rRNA central domain where it helps coordinate assembly of the platform of the 30S subunit. In Shewanella loihica (strain ATCC BAA-1088 / PV-4), this protein is Small ribosomal subunit protein uS8.